Reading from the N-terminus, the 428-residue chain is Tyrosine--tRNA ligase (428 aa).

Tyr37 serves as a coordination point for L-tyrosine. The 'HIGH' region signature appears at 42 to 51 (PTGSSLHAGH). L-tyrosine is bound by residues Tyr175 and Gln179. Residues 235–239 (KFGKS) carry the 'KMSKS' region motif. Lys238 contributes to the ATP binding site. An S4 RNA-binding domain is found at 358–415 (ATILDLLVESGLEKSKGAARRTVGEGGAYVNNQRIEDIEWSPSAEELLHGSWLVLRKG).

The protein belongs to the class-I aminoacyl-tRNA synthetase family. TyrS type 1 subfamily. In terms of assembly, homodimer.

The protein localises to the cytoplasm. The enzyme catalyses tRNA(Tyr) + L-tyrosine + ATP = L-tyrosyl-tRNA(Tyr) + AMP + diphosphate + H(+). Functionally, catalyzes the attachment of tyrosine to tRNA(Tyr) in a two-step reaction: tyrosine is first activated by ATP to form Tyr-AMP and then transferred to the acceptor end of tRNA(Tyr). This is Tyrosine--tRNA ligase from Corynebacterium jeikeium (strain K411).